A 328-amino-acid polypeptide reads, in one-letter code: Isopenicillin N synthase (328 aa).

Isopenicillin N-binding residues include Arg85, Tyr89, Ser181, and Tyr187. N-[(5S)-5-amino-5-carboxypentanoyl]-L-cysteinyl-D-valine contacts are provided by Arg85, Tyr89, Ser181, Tyr187, His210, and Asp212. The Fe2OG dioxygenase domain maps to 178–284 (TLSSVSLIRY…RLSLPFFFHA (107 aa)). Residues His210, Asp212, and His266 each coordinate Fe(2+). Arg275 lines the 2-oxoglutarate pocket. Ser277 serves as a coordination point for isopenicillin N. Ser277 provides a ligand contact to N-[(5S)-5-amino-5-carboxypentanoyl]-L-cysteinyl-D-valine.

The protein belongs to the iron/ascorbate-dependent oxidoreductase family. Requires Fe cation as cofactor. It depends on L-ascorbate as a cofactor.

It carries out the reaction N-[(5S)-5-amino-5-carboxypentanoyl]-L-cysteinyl-D-valine + O2 = isopenicillin N + 2 H2O. The protein operates within antibiotic biosynthesis; penicillin G biosynthesis; penicillin G from L-alpha-aminoadipate and L-cysteine and L-valine: step 2/3. Functionally, removes, in the presence of oxygen, 4 hydrogen atoms from delta-L-(alpha-aminoadipyl)-L-cysteinyl-D-valine (ACV) to form the azetidinone and thiazolidine rings of isopenicillin. The chain is Isopenicillin N synthase (pcbC) from Amycolatopsis lactamdurans (Nocardia lactamdurans).